Here is a 258-residue protein sequence, read N- to C-terminus: Spindlin-2A (258 aa).

A compositionally biased stretch (low complexity) spans 1 to 23 (MKTPNAQEAEGQQTRAAAGRATG). The segment at 1 to 49 (MKTPNAQEAEGQQTRAAAGRATGSANMTKKKVSQKKQRGRPSSQPRRNI) is disordered. A compositionally biased stretch (basic residues) spans 28–39 (TKKKVSQKKQRG). Tudor-like domain regions lie at residues 50-99 (VGCR…LELH), 129-178 (IGKA…YQLL), and 210-255 (IGKH…YDLV). Histone H3K4me3 and H3R8me2a binding stretches follow at residues E138 and 246–248 (DFH).

The protein belongs to the SPIN/STSY family. In terms of assembly, interacts with C11orf84/SPINDOC.

It is found in the nucleus. May be involved in the regulation of cell cycle progression. Exhibits H3K4me3-binding activity. This chain is Spindlin-2A (SPIN2A), found in Homo sapiens (Human).